Consider the following 483-residue polypeptide: Dual specificity protein phosphatase CDC14C (483 aa).

A disordered region spans residues 1-45 (MKRKSEGRSSWAAATCSPCCSLTSPSVKKIRSPTQQDPRHRDPQD). The Nucleolar localization signal signature appears at 1 to 53 (MKRKSEGRSSWAAATCSPCCSLTSPSVKKIRSPTQQDPRHRDPQDDVYLDITD). Positions 12–26 (AAATCSPCCSLTSPS) are enriched in low complexity. An a region spans residues 43–197 (PQDDVYLDIT…AMQYGFLNFN (155 aa)). The tract at residues 198–211 (SFNLDEYEHYEKAE) is linker. A b region spans residues 212-378 (NGDLNWIIPD…EGDYFCQKLK (167 aa)). The Tyrosine-protein phosphatase domain occupies 213–373 (GDLNWIIPDR…TSLWLEGDYF (161 aa)). Catalysis depends on cysteine 313, which acts as the Phosphocysteine intermediate. Residues 407 to 426 (QDQQEPEPYSDDDEINGGTQ) form a disordered region. Positions 408-421 (DQQEPEPYSDDDEI) are enriched in acidic residues. Residues 444–466 (ILLTCPLAVLTSALCSVVIWWIV) form a helical membrane-spanning segment.

The protein belongs to the protein-tyrosine phosphatase family. Non-receptor class CDC14 subfamily.

The protein localises to the membrane. It is found in the nucleus. The protein resides in the nucleolus. It localises to the cytoplasm. Its subcellular location is the cytoskeleton. It catalyses the reaction O-phospho-L-tyrosyl-[protein] + H2O = L-tyrosyl-[protein] + phosphate. The catalysed reaction is O-phospho-L-seryl-[protein] + H2O = L-seryl-[protein] + phosphate. It carries out the reaction O-phospho-L-threonyl-[protein] + H2O = L-threonyl-[protein] + phosphate. Functionally, dual-specificity phosphatase. Preferentially dephosphorylates proteins modified by proline-directed kinases. The sequence is that of Dual specificity protein phosphatase CDC14C from Symphalangus syndactylus (Siamang).